We begin with the raw amino-acid sequence, 315 residues long: Putative olfactory receptor 2I1 (315 aa).

Residues 1–24 (MKANYSAEERFLLLGFSDWPSLQP) lie on the Extracellular side of the membrane. The chain crosses the membrane as a helical span at residues 25–48 (VLFALVLLCYLLTLTGNSALVLLA). Residues 49-56 (VRDPRLHT) are Cytoplasmic-facing. A helical membrane pass occupies residues 57–78 (PMYYFLCHLALVDAGFTTSVVP). Residues 79-99 (PLLANLRGPALWLPRSHCTAQ) are Extracellular-facing. An intrachain disulfide couples Cys-96 to Cys-188. A helical transmembrane segment spans residues 100–119 (LCASLALGSAECVLLAVMAL). Residues 120-138 (DRAAAVCRPLRYAGLVSPR) are Cytoplasmic-facing. The helical transmembrane segment at 139–157 (LCRTLASASWLSGLTNSVA) threads the bilayer. Residues 158 to 195 (QTALLAERPLCAPRLLDHFICELPALLKLACGGDGDTT) lie on the Extracellular side of the membrane. Residues 196–219 (ENQMFAARVVILLLPFAVILASYG) form a helical membrane-spanning segment. Over 220–236 (AVARAVCCMRFSGGRRR) the chain is Cytoplasmic. The helical transmembrane segment at 237 to 259 (AVGTCGSHLTAVCLFYGSAIYTY) threads the bilayer. The Extracellular portion of the chain corresponds to 260-272 (LQPAQRYNQARGK). A helical membrane pass occupies residues 273–292 (FVSLFYTVVTPALNPLIYTL). The Cytoplasmic portion of the chain corresponds to 293-315 (RNKKVKGAARRLLRSLGRGQAGQ).

This sequence belongs to the G-protein coupled receptor 1 family.

It localises to the cell membrane. Functionally, odorant receptor. The sequence is that of Putative olfactory receptor 2I1 from Homo sapiens (Human).